Consider the following 573-residue polypeptide: DNA ligase (573 aa).

Glu-250 is a binding site for ATP. Catalysis depends on Lys-252, which acts as the N6-AMP-lysine intermediate. Residues Arg-257, Arg-272, Glu-301, Phe-342, Arg-432, and Lys-438 each coordinate ATP.

The protein belongs to the ATP-dependent DNA ligase family. Requires Mg(2+) as cofactor.

The catalysed reaction is ATP + (deoxyribonucleotide)n-3'-hydroxyl + 5'-phospho-(deoxyribonucleotide)m = (deoxyribonucleotide)n+m + AMP + diphosphate.. DNA ligase that seals nicks in double-stranded DNA during DNA replication, DNA recombination and DNA repair. The sequence is that of DNA ligase from Methanococcus maripaludis (strain DSM 14266 / JCM 13030 / NBRC 101832 / S2 / LL).